A 406-amino-acid polypeptide reads, in one-letter code: MIGTRLPAWTRVLACGVAGLSLMTISAKAEDVITLGASVQLSGPVANTGRYYQDAYNITIDKINAAGGVKVDGKPYKLALKIYDNQSNVNLSVRQYTQLVTTDKVNFLLGPFASNFALADSVISEKYRIPMVQGGGASDEIYSRNFKYIFGTLAPASNYFGSTVEMLKGLDPKVTNVALVYADDSFDISVADGTRKLLKDAGFTIAADEKFATNSTDFTSLISQIKSKNVDAVLVAGHETEVLNFVRQSKSLAFDPKLYSFTVGVPTEDFRKALGKDANYAFGMTAWLPSADLKDRWFGDAAKFETEYKARFNYEPDYHAASGASDVEAFAEAIEKANSLDPQKVRDALASIKFDSLYGPIAFDKQGQINLPQIVVQVQDGKLVEIRGPAGQVNPPQYPMPAWNAR.

The first 29 residues, 1–29 (MIGTRLPAWTRVLACGVAGLSLMTISAKA), serve as a signal peptide directing secretion.

It belongs to the leucine-binding protein family.

Functionally, component of an amino-acid transport system. This chain is Leu/Ile/Val-binding protein homolog 5, found in Brucella suis biovar 1 (strain 1330).